Here is a 193-residue protein sequence, read N- to C-terminus: MSGMTEVSSLTGRLLVATPALADPNFDRAVVLLLDHDEEGSLGVVLNRPTPVDVSDILEGWADLAGEPGVVFQGGPVSLDSALGVAVIPGGASVDGAPLGWRRVHGAIGLVDLEAPPELLAKALGSLRIFAGYAGWGPGQLEDELVEGAWYVVESEPGDVSSPSPERLWREVLRRQRNELAMVATYPDDPSLN.

The protein belongs to the UPF0301 (AlgH) family.

The sequence is that of UPF0301 protein SAV_5129 from Streptomyces avermitilis (strain ATCC 31267 / DSM 46492 / JCM 5070 / NBRC 14893 / NCIMB 12804 / NRRL 8165 / MA-4680).